A 221-amino-acid chain; its full sequence is Carbonic anhydrase (221 aa).

Zn(2+)-binding residues include Cys-38, Asp-40, His-99, and Cys-102.

The protein belongs to the beta-class carbonic anhydrase family. The cofactor is Zn(2+).

It catalyses the reaction hydrogencarbonate + H(+) = CO2 + H2O. This Helicobacter pylori (strain ATCC 700392 / 26695) (Campylobacter pylori) protein is Carbonic anhydrase (cynT).